The primary structure comprises 263 residues: Aminoglycoside (3'') (9) adenylyltransferase (263 aa).

The catalysed reaction is streptomycin + ATP = 3''-O-adenylylstreptomycin + diphosphate. It carries out the reaction spectinomycin + ATP = 9-O-adenylylspectinomycin + diphosphate. Mediates bacterial resistance to the antibiotics streptomycin and spectinomycin. The polypeptide is Aminoglycoside (3'') (9) adenylyltransferase (Escherichia coli).